The chain runs to 147 residues: Hemoglobin subunit epsilon (147 aa).

The Globin domain maps to 3-147 (HWSAEEKQLI…VAHALARKYH (145 aa)). 2 residues coordinate heme b: His64 and His93.

This sequence belongs to the globin family. In terms of assembly, heterotetramer of two epsilon chains and two alpha chains. Hemoglobin E (Hbe) contains a alpha-A chains while hemoglobin M (Hbm) contains alpha-D chains.

Beta-type chain found in early embryos. The chain is Hemoglobin subunit epsilon (HBE) from Gallus gallus (Chicken).